The sequence spans 152 residues: Protein NrdI (152 aa).

Belongs to the NrdI family.

Functionally, probably involved in ribonucleotide reductase function. In Rhodococcus opacus (strain B4), this protein is Protein NrdI.